Consider the following 94-residue polypeptide: Large ribosomal subunit protein bL25 (94 aa).

It belongs to the bacterial ribosomal protein bL25 family. As to quaternary structure, part of the 50S ribosomal subunit; part of the 5S rRNA/L5/L18/L25 subcomplex. Contacts the 5S rRNA. Binds to the 5S rRNA independently of L5 and L18.

Its function is as follows. This is one of the proteins that binds to the 5S RNA in the ribosome where it forms part of the central protuberance. This is Large ribosomal subunit protein bL25 from Enterobacter sp. (strain 638).